Reading from the N-terminus, the 184-residue chain is Ribosome-recycling factor (184 aa).

This sequence belongs to the RRF family.

It localises to the cytoplasm. Responsible for the release of ribosomes from messenger RNA at the termination of protein biosynthesis. May increase the efficiency of translation by recycling ribosomes from one round of translation to another. The chain is Ribosome-recycling factor from Thermoanaerobacter pseudethanolicus (strain ATCC 33223 / 39E) (Clostridium thermohydrosulfuricum).